Reading from the N-terminus, the 61-residue chain is Small ribosomal subunit protein uS14 (61 aa).

Residues cysteine 24, cysteine 27, cysteine 40, and cysteine 43 each coordinate Zn(2+).

The protein belongs to the universal ribosomal protein uS14 family. Zinc-binding uS14 subfamily. Part of the 30S ribosomal subunit. Contacts proteins S3 and S10. Zn(2+) serves as cofactor.

In terms of biological role, binds 16S rRNA, required for the assembly of 30S particles and may also be responsible for determining the conformation of the 16S rRNA at the A site. The chain is Small ribosomal subunit protein uS14 from Clostridium kluyveri (strain NBRC 12016).